Reading from the N-terminus, the 705-residue chain is Glycine--tRNA ligase beta subunit (705 aa).

The protein belongs to the class-II aminoacyl-tRNA synthetase family. Tetramer of two alpha and two beta subunits.

It localises to the cytoplasm. The enzyme catalyses tRNA(Gly) + glycine + ATP = glycyl-tRNA(Gly) + AMP + diphosphate. The sequence is that of Glycine--tRNA ligase beta subunit from Persephonella marina (strain DSM 14350 / EX-H1).